Here is a 1058-residue protein sequence, read N- to C-terminus: Carbamoyl phosphate synthase large chain (1058 aa).

The tract at residues 1–401 (MPKRTDIQKI…SLLKACRSLE (401 aa)) is carboxyphosphate synthetic domain. Positions 129, 169, 175, 176, 208, 210, 215, 241, 242, 243, 284, and 298 each coordinate ATP. The region spanning 133–327 (KQLMEELEQP…IAKLAAKIAV (195 aa)) is the ATP-grasp 1 domain. Mg(2+) is bound by residues Gln284, Glu298, and Asn300. Residues Gln284, Glu298, and Asn300 each coordinate Mn(2+). An oligomerization domain region spans residues 402-546 (IGVHHNEIPE…YSTYGWENES (145 aa)). Residues 547 to 929 (IRSDKESVLV…ALYKAFEASY (383 aa)) form a carbamoyl phosphate synthetic domain region. One can recognise an ATP-grasp 2 domain in the interval 671 to 861 (EQALKELDIP…MAQVATKLIL (191 aa)). ATP is bound by residues Arg707, Ser746, Ile748, Glu752, Gly777, Val778, His779, Ser780, Gln820, and Glu832. Residues Gln820, Glu832, and Asn834 each coordinate Mg(2+). Residues Gln820, Glu832, and Asn834 each coordinate Mn(2+). Residues 930–1058 (LHLPTFGNVV…ESRSFVTEAI (129 aa)) enclose the MGS-like domain. The segment at 930–1058 (LHLPTFGNVV…ESRSFVTEAI (129 aa)) is allosteric domain.

The protein belongs to the CarB family. In terms of assembly, composed of two chains; the small (or glutamine) chain promotes the hydrolysis of glutamine to ammonia, which is used by the large (or ammonia) chain to synthesize carbamoyl phosphate. Tetramer of heterodimers (alpha,beta)4. Mg(2+) serves as cofactor. Mn(2+) is required as a cofactor.

It carries out the reaction hydrogencarbonate + L-glutamine + 2 ATP + H2O = carbamoyl phosphate + L-glutamate + 2 ADP + phosphate + 2 H(+). The enzyme catalyses hydrogencarbonate + NH4(+) + 2 ATP = carbamoyl phosphate + 2 ADP + phosphate + 2 H(+). Its pathway is amino-acid biosynthesis; L-arginine biosynthesis; carbamoyl phosphate from bicarbonate: step 1/1. It participates in pyrimidine metabolism; UMP biosynthesis via de novo pathway; (S)-dihydroorotate from bicarbonate: step 1/3. Its function is as follows. Large subunit of the glutamine-dependent carbamoyl phosphate synthetase (CPSase). CPSase catalyzes the formation of carbamoyl phosphate from the ammonia moiety of glutamine, carbonate, and phosphate donated by ATP, constituting the first step of 2 biosynthetic pathways, one leading to arginine and/or urea and the other to pyrimidine nucleotides. The large subunit (synthetase) binds the substrates ammonia (free or transferred from glutamine from the small subunit), hydrogencarbonate and ATP and carries out an ATP-coupled ligase reaction, activating hydrogencarbonate by forming carboxy phosphate which reacts with ammonia to form carbamoyl phosphate. The chain is Carbamoyl phosphate synthase large chain from Streptococcus pneumoniae serotype 19F (strain G54).